We begin with the raw amino-acid sequence, 402 residues long: GTPase HflX (402 aa).

In terms of domain architecture, Hflx-type G spans 181 to 350 (DTVGLIGYTN…MIIEHLNLSI (170 aa)). GTP contacts are provided by residues 187–194 (GYTNAGKT), 212–216 (FTTLT), 233–236 (DTVG), 300–303 (NKVD), and 328–330 (SAK). Residues Thr194 and Thr214 each contribute to the Mg(2+) site.

Belongs to the TRAFAC class OBG-HflX-like GTPase superfamily. HflX GTPase family. As to quaternary structure, monomer. Associates with the 50S ribosomal subunit. Requires Mg(2+) as cofactor.

It is found in the cytoplasm. In terms of biological role, GTPase that associates with the 50S ribosomal subunit and may have a role during protein synthesis or ribosome biogenesis. In Methanocaldococcus jannaschii (strain ATCC 43067 / DSM 2661 / JAL-1 / JCM 10045 / NBRC 100440) (Methanococcus jannaschii), this protein is GTPase HflX.